Consider the following 461-residue polypeptide: Cysteine--tRNA ligase (461 aa).

A Zn(2+)-binding site is contributed by Cys-29. Positions Met-31 to His-41 match the 'HIGH' region motif. Zn(2+)-binding residues include Cys-210, His-235, and Glu-239. The short motif at Lys-267 to Ser-271 is the 'KMSKS' region element. ATP is bound at residue Lys-270.

Belongs to the class-I aminoacyl-tRNA synthetase family. In terms of assembly, monomer. Zn(2+) is required as a cofactor.

Its subcellular location is the cytoplasm. The catalysed reaction is tRNA(Cys) + L-cysteine + ATP = L-cysteinyl-tRNA(Cys) + AMP + diphosphate. This Azotobacter vinelandii (strain DJ / ATCC BAA-1303) protein is Cysteine--tRNA ligase.